Consider the following 299-residue polypeptide: uncharacterized protein (299 aa).

The interval 1 to 44 (MSDSNLTNPIKAFFHDEFPEQYQEPPGLQKNMKPVPDCGEKSYK) is disordered. NADP(+) is bound at residue 55-79 (LVTGGDSGIGRAAAIAYAREGADVA). S188 is a substrate binding site. Residue Y201 is the Proton acceptor of the active site.

Belongs to the short-chain dehydrogenases/reductases (SDR) family.

This is an uncharacterized protein from Bacillus subtilis (strain 168).